A 216-amino-acid chain; its full sequence is MVVKIVEAYEKVDQVKILFKEYVEWLNIDLSFQNFSEEFNSLPGKYSIENDGRLYIAYSDESLAGCVGLRKINIEINENKNNQQVDHDETSTIIIKKEQQQQQQQQQQQQQQQQQQQQQQQQQQQQQQQQQQQQKICEMKRLFVKSEFRGLKIGKLLVERLINDAKEQNYDYMVLDTLKTLTTAISIYKSFGFIEFDPYYYNPNSNDVTFLKLKLK.

The N-acetyltransferase domain occupies 1 to 216 (MVVKIVEAYE…DVTFLKLKLK (216 aa)).

It belongs to the acetyltransferase family.

This is an uncharacterized protein from Dictyostelium discoideum (Social amoeba).